The sequence spans 142 residues: ER-derived vesicles protein ERV15 (142 aa).

Over 1-7 (MSGTGLS) the chain is Cytoplasmic. The helical transmembrane segment at 8-28 (LFVTGLILNCLNSICQIYFTI) threads the bilayer. The Extracellular portion of the chain corresponds to 29 to 55 (LYGDLEADYINSIELCKRVNRLSVPEA). The helical transmembrane segment at 56 to 76 (ILQAFISALFLFNGYWFVFLL) threads the bilayer. Residues 77–114 (NVPVLAYNASKVYKKTHLLDATDIFRKLGRCKIECFLK) lie on the Cytoplasmic side of the membrane. The helical transmembrane segment at 115-135 (LGFYLLIFFFYFYRMVTALLE) threads the bilayer. The Extracellular segment spans residues 136-142 (NDANLIS).

Belongs to the cornichon family.

Its subcellular location is the membrane. The polypeptide is ER-derived vesicles protein ERV15 (ERV15) (Saccharomyces cerevisiae (strain ATCC 204508 / S288c) (Baker's yeast)).